The following is a 278-amino-acid chain: 3-methyl-2-oxobutanoate hydroxymethyltransferase (278 aa).

The Mg(2+) site is built by Asp43 and Asp82. 3-methyl-2-oxobutanoate-binding positions include 43-44 (DS), Asp82, and Lys112. A Mg(2+)-binding site is contributed by Glu114. Glu181 serves as the catalytic Proton acceptor.

This sequence belongs to the PanB family. As to quaternary structure, homodecamer; pentamer of dimers. Mg(2+) serves as cofactor.

It is found in the cytoplasm. It catalyses the reaction 3-methyl-2-oxobutanoate + (6R)-5,10-methylene-5,6,7,8-tetrahydrofolate + H2O = 2-dehydropantoate + (6S)-5,6,7,8-tetrahydrofolate. It participates in cofactor biosynthesis; (R)-pantothenate biosynthesis; (R)-pantoate from 3-methyl-2-oxobutanoate: step 1/2. Its function is as follows. Catalyzes the reversible reaction in which hydroxymethyl group from 5,10-methylenetetrahydrofolate is transferred onto alpha-ketoisovalerate to form ketopantoate. This is 3-methyl-2-oxobutanoate hydroxymethyltransferase from Desulfitobacterium hafniense (strain Y51).